The primary structure comprises 318 residues: Aspartate carbamoyltransferase catalytic subunit (318 aa).

2 residues coordinate carbamoyl phosphate: Arg-67 and Thr-68. Lys-95 is an L-aspartate binding site. Carbamoyl phosphate-binding residues include Arg-117, His-145, and Gln-148. L-aspartate is bound by residues Arg-178 and Arg-236. Positions 277 and 278 each coordinate carbamoyl phosphate.

The protein belongs to the aspartate/ornithine carbamoyltransferase superfamily. ATCase family. As to quaternary structure, heterododecamer (2C3:3R2) of six catalytic PyrB chains organized as two trimers (C3), and six regulatory PyrI chains organized as three dimers (R2).

The catalysed reaction is carbamoyl phosphate + L-aspartate = N-carbamoyl-L-aspartate + phosphate + H(+). The protein operates within pyrimidine metabolism; UMP biosynthesis via de novo pathway; (S)-dihydroorotate from bicarbonate: step 2/3. In terms of biological role, catalyzes the condensation of carbamoyl phosphate and aspartate to form carbamoyl aspartate and inorganic phosphate, the committed step in the de novo pyrimidine nucleotide biosynthesis pathway. The protein is Aspartate carbamoyltransferase catalytic subunit of Roseiflexus sp. (strain RS-1).